The primary structure comprises 148 residues: Ribosome-binding factor A (148 aa).

Residues 120–148 are disordered; it reads AKAREGASYAGDADPYRTAEPDADDAPRA. Over residues 133-148 the composition is skewed to basic and acidic residues; that stretch reads DPYRTAEPDADDAPRA.

It belongs to the RbfA family. As to quaternary structure, monomer. Binds 30S ribosomal subunits, but not 50S ribosomal subunits or 70S ribosomes.

It localises to the cytoplasm. Functionally, one of several proteins that assist in the late maturation steps of the functional core of the 30S ribosomal subunit. Associates with free 30S ribosomal subunits (but not with 30S subunits that are part of 70S ribosomes or polysomes). Required for efficient processing of 16S rRNA. May interact with the 5'-terminal helix region of 16S rRNA. This is Ribosome-binding factor A from Micrococcus luteus (strain ATCC 4698 / DSM 20030 / JCM 1464 / CCM 169 / CCUG 5858 / IAM 1056 / NBRC 3333 / NCIMB 9278 / NCTC 2665 / VKM Ac-2230) (Micrococcus lysodeikticus).